A 289-amino-acid chain; its full sequence is BTB/POZ domain-containing protein KCTD7 (289 aa).

The disordered stretch occupies residues 1–42; sequence MVVVNGREPDSRHSDGAMSSSEAEDDFLEPATPTATQAGHGL. In terms of domain architecture, BTB spans 53–141; the sequence is VPLNIGGAHF…YAIGPLLEQL (89 aa).

Interacts with CUL3.

It is found in the cell membrane. The protein localises to the cytoplasm. It localises to the cytosol. Functionally, may be involved in the control of excitability of cortical neurons. The protein is BTB/POZ domain-containing protein KCTD7 (Kctd7) of Rattus norvegicus (Rat).